A 124-amino-acid polypeptide reads, in one-letter code: Large ribosomal subunit protein bL12 (124 aa).

Belongs to the bacterial ribosomal protein bL12 family. In terms of assembly, homodimer. Part of the ribosomal stalk of the 50S ribosomal subunit. Forms a multimeric L10(L12)X complex, where L10 forms an elongated spine to which 2 to 4 L12 dimers bind in a sequential fashion. Binds GTP-bound translation factors.

Its function is as follows. Forms part of the ribosomal stalk which helps the ribosome interact with GTP-bound translation factors. Is thus essential for accurate translation. The sequence is that of Large ribosomal subunit protein bL12 from Borreliella burgdorferi (strain ZS7) (Borrelia burgdorferi).